Reading from the N-terminus, the 485-residue chain is Bifunctional protein GlmU (485 aa).

The segment at 1–241 (MSASDFSSAV…ARELAGVNDR (241 aa)) is pyrophosphorylase. Residues 13 to 16 (LAAG), K27, Q84, and 89 to 90 (GT) contribute to the UDP-N-acetyl-alpha-D-glucosamine site. Residue D114 participates in Mg(2+) binding. Residues G151, E166, N181, and N239 each contribute to the UDP-N-acetyl-alpha-D-glucosamine site. N239 lines the Mg(2+) pocket. Positions 242–262 (VQLAEAGAELNRRTVIAAMRG) are linker. Residues 263-485 (GATIVDPATT…AAQNVHNQEG (223 aa)) are N-acetyltransferase. R344 and K362 together coordinate UDP-N-acetyl-alpha-D-glucosamine. H374 functions as the Proton acceptor in the catalytic mechanism. UDP-N-acetyl-alpha-D-glucosamine is bound by residues Y377 and N388. Acetyl-CoA contacts are provided by residues A391, 397 to 398 (NY), S416, and A434. The disordered stretch occupies residues 465 to 485 (RPGTAAAQAAEAAQNVHNQEG). Residues 469 to 478 (AAAQAAEAAQ) are compositionally biased toward low complexity.

It in the N-terminal section; belongs to the N-acetylglucosamine-1-phosphate uridyltransferase family. The protein in the C-terminal section; belongs to the transferase hexapeptide repeat family. As to quaternary structure, homotrimer. Requires Mg(2+) as cofactor.

It is found in the cytoplasm. The catalysed reaction is alpha-D-glucosamine 1-phosphate + acetyl-CoA = N-acetyl-alpha-D-glucosamine 1-phosphate + CoA + H(+). It carries out the reaction N-acetyl-alpha-D-glucosamine 1-phosphate + UTP + H(+) = UDP-N-acetyl-alpha-D-glucosamine + diphosphate. It participates in nucleotide-sugar biosynthesis; UDP-N-acetyl-alpha-D-glucosamine biosynthesis; N-acetyl-alpha-D-glucosamine 1-phosphate from alpha-D-glucosamine 6-phosphate (route II): step 2/2. The protein operates within nucleotide-sugar biosynthesis; UDP-N-acetyl-alpha-D-glucosamine biosynthesis; UDP-N-acetyl-alpha-D-glucosamine from N-acetyl-alpha-D-glucosamine 1-phosphate: step 1/1. It functions in the pathway bacterial outer membrane biogenesis; LPS lipid A biosynthesis. Catalyzes the last two sequential reactions in the de novo biosynthetic pathway for UDP-N-acetylglucosamine (UDP-GlcNAc). The C-terminal domain catalyzes the transfer of acetyl group from acetyl coenzyme A to glucosamine-1-phosphate (GlcN-1-P) to produce N-acetylglucosamine-1-phosphate (GlcNAc-1-P), which is converted into UDP-GlcNAc by the transfer of uridine 5-monophosphate (from uridine 5-triphosphate), a reaction catalyzed by the N-terminal domain. The chain is Bifunctional protein GlmU from Corynebacterium glutamicum (strain ATCC 13032 / DSM 20300 / JCM 1318 / BCRC 11384 / CCUG 27702 / LMG 3730 / NBRC 12168 / NCIMB 10025 / NRRL B-2784 / 534).